We begin with the raw amino-acid sequence, 1377 residues long: DNA-directed RNA polymerase subunit beta (1377 aa).

This sequence belongs to the RNA polymerase beta chain family. In terms of assembly, the RNAP catalytic core consists of 2 alpha, 1 beta, 1 beta' and 1 omega subunit. When a sigma factor is associated with the core the holoenzyme is formed, which can initiate transcription.

The enzyme catalyses RNA(n) + a ribonucleoside 5'-triphosphate = RNA(n+1) + diphosphate. In terms of biological role, DNA-dependent RNA polymerase catalyzes the transcription of DNA into RNA using the four ribonucleoside triphosphates as substrates. The protein is DNA-directed RNA polymerase subunit beta of Azoarcus sp. (strain BH72).